The sequence spans 215 residues: Protein GET1 (215 aa).

Over 1–4 the chain is Lumenal; that stretch reads MPSL. A helical membrane pass occupies residues 5 to 24; sequence LILIFTIEVAVELINTIGAA. Topologically, residues 25 to 110 are cytoplasmic; it reads TINNLLWRIF…NFDKYITGIR (86 aa). Positions 72 to 104 form a coiled coil; it reads AKWAKLRRQHDKLLEQLEKKKAALDSTKGNFDK. A helical transmembrane segment spans residues 111-131; the sequence is WVGTQGLRYFLPFWYAKVPMF. Topologically, residues 132-155 are lumenal; it reads WLPYGWFPYYAEWLVSFPRAPMGS. A helical membrane pass occupies residues 156 to 172; that stretch reads VSIASWQLACTGFVVLI. Residues 173–215 lie on the Cytoplasmic side of the membrane; sequence KDAITALVVFVMGMRQSNVKQAVPVKAVSGEKASDEKEGKKEL.

Belongs to the WRB/GET1 family. Interacts with GET3.

The protein resides in the endoplasmic reticulum membrane. Functionally, required for the post-translational delivery of tail-anchored (TA) proteins to the endoplasmic reticulum. Acts as a membrane receptor for soluble GET3, which recognizes and selectively binds the transmembrane domain of TA proteins in the cytosol. The sequence is that of Protein GET1 from Pyricularia oryzae (strain 70-15 / ATCC MYA-4617 / FGSC 8958) (Rice blast fungus).